The primary structure comprises 399 residues: NADH-quinone oxidoreductase subunit D 2 (399 aa).

Residues 1–20 (MIASKESNSAATPATSAPTL) are disordered. The segment covering 9-20 (SAATPATSAPTL) has biased composition (low complexity).

This sequence belongs to the complex I 49 kDa subunit family. As to quaternary structure, NDH-1 is composed of 14 different subunits. Subunits NuoB, C, D, E, F, and G constitute the peripheral sector of the complex.

It localises to the cell inner membrane. It carries out the reaction a quinone + NADH + 5 H(+)(in) = a quinol + NAD(+) + 4 H(+)(out). Its function is as follows. NDH-1 shuttles electrons from NADH, via FMN and iron-sulfur (Fe-S) centers, to quinones in the respiratory chain. The immediate electron acceptor for the enzyme in this species is believed to be ubiquinone. Couples the redox reaction to proton translocation (for every two electrons transferred, four hydrogen ions are translocated across the cytoplasmic membrane), and thus conserves the redox energy in a proton gradient. This chain is NADH-quinone oxidoreductase subunit D 2, found in Opitutus terrae (strain DSM 11246 / JCM 15787 / PB90-1).